Reading from the N-terminus, the 193-residue chain is Ion-translocating oxidoreductase complex subunit A (193 aa).

The next 6 membrane-spanning stretches (helical) occupy residues 5 to 25 (LLLF…FLGL), 39 to 59 (MGMG…AWLI), 63 to 83 (ILIP…VIAV), 102 to 122 (LLGI…VALL), 134 to 154 (ALYG…FAAI), and 171 to 191 (AIAL…SGLV).

It belongs to the NqrDE/RnfAE family. In terms of assembly, the complex is composed of six subunits: RsxA, RsxB, RsxC, RsxD, RsxE and RsxG.

The protein localises to the cell inner membrane. Functionally, part of a membrane-bound complex that couples electron transfer with translocation of ions across the membrane. Required to maintain the reduced state of SoxR. The protein is Ion-translocating oxidoreductase complex subunit A of Shigella flexneri serotype 5b (strain 8401).